The chain runs to 329 residues: SLAM family member 5 (329 aa).

An N-terminal signal peptide occupies residues 1–21; it reads MAQRHLWIWFLCLQTWSEAAG. The Extracellular segment spans residues 22-221; sequence KDADPMVMNG…TPSFHPRHAV (200 aa). Residues 26 to 129 form the Ig-like V-type domain; the sequence is PMVMNGILGE…IYYLHIYRRL (104 aa). Residues 132 to 206 enclose the Ig-like C2-type domain; that stretch reads PKITQSLISS…SNSSDSVTVQ (75 aa). N-linked (GlcNAc...) asparagine glycosylation occurs at Asn-147. Cys-152 and Cys-190 form a disulfide bridge. The chain crosses the membrane as a helical span at residues 222–242; the sequence is LPGGLAVLFLLILIPMLAFLF. Over 243–329 the chain is Cytoplasmic; the sequence is RLYKRRRDRI…PKALGNEIVV (87 aa). Positions 263-268 match the ITSM 1 motif; it reads TVYAVV. Position 265 is a phosphotyrosine (Tyr-265). Tyr-280 carries the post-translational modification Phosphotyrosine; by LYN. The short motif at 298 to 303 is the ITSM 2 element; the sequence is TIYSSV. At Tyr-300 the chain carries Phosphotyrosine.

Homodimer; via its extracellular domain. Forms a head to tail dimer with a CD48 molecule from another cell. Interacts with SH2 domain-containing proteins SH2D1A/SAP and SH2D1B/EAT-2. Interacts with tyrosine-protein phosphatases PTPN6/SHP-1 and PTPN11/SHP-2 via its phosphorylated cytoplasmic domain, and this interaction is blocked by SH2D1A. In terms of processing, phosphorylated by tyrosine-protein kinase LCK on tyrosine residues following ligation induced by agonist monoclonal antibody. The association with SH2D1A/SAP is dependent of tyrosine phosphorylation of its cytoplasmic domain. Phosphorylated on Tyr-280 and Tyr-300 following platelet aggregation. Phosphorylated on tyrosine residues upon high affinity immunoglobulin epsilon receptor aggregation in mast cells. Post-translationally, N-glycosylated. As to expression, predominantly expressed in hematopoietic tissues such as lymph node, spleen, thymus, and bone marrow. Detected also in lung.

The protein localises to the cell membrane. Its function is as follows. Self-ligand receptor of the signaling lymphocytic activation molecule (SLAM) family. SLAM receptors triggered by homo- or heterotypic cell-cell interactions are modulating the activation and differentiation of a wide variety of immune cells and thus are involved in the regulation and interconnection of both innate and adaptive immune response. Activities are controlled by presence or absence of small cytoplasmic adapter proteins, SH2D1A/SAP and/or SH2D1B/EAT-2. Can mediate natural killer (NK) cell cytotoxicity dependent on SH2D1A and SH2D1B. Increases proliferative responses of activated T-cells and SH2D1A/SAP does not seen be required for this process. Homophilic interactions enhance interferon gamma/IFNG secretion in lymphocytes and induce platelet stimulation via a SH2D1A/SAP-dependent pathway. May serve as a marker for hematopoietic progenitor cells. Required for a prolonged T-cell:B-cell contact, optimal T follicular helper function, and germinal center formation. In germinal centers involved in maintaining B cell tolerance and in preventing autoimmunity. In mast cells negatively regulates high affinity immunoglobulin epsilon receptor signaling; independent of SH2D1A and SH2D1B but implicating FES and PTPN6/SHP-1. In macrophages enhances LPS-induced MAPK phosphorylation and NF-kappaB activation and modulates LPS-induced cytokine secretion; involving ITSM 2. Positively regulates macroautophagy in primary dendritic cells via stabilization of IRF8; inhibits TRIM21-mediated proteasomal degradation of IRF8. The chain is SLAM family member 5 (Cd84) from Mus musculus (Mouse).